The sequence spans 166 residues: MKLTEKETEILEILDENSRADLETIAKMAGIPVNEVKTIIDKLEKEKVIIDYSAMIDWRKVDGHEGVTAMIDVKVTPKRGVGFDEVAERIYRFQEVESVYLMSGVYDLSVVIRGNSMSDVARFVSDKLSTLDSVVSTTTHFILKKYKHDGKVFETGDDDKRIVVSP.

Residues 3 to 65 (LTEKETEILE…IDWRKVDGHE (63 aa)) form the HTH asnC-type domain. Residues 22 to 41 (LETIAKMAGIPVNEVKTIID) constitute a DNA-binding region (H-T-H motif).

This is an uncharacterized protein from Bacillus subtilis (strain 168).